A 274-amino-acid chain; its full sequence is Large ribosomal subunit protein uL2 (274 aa).

Disordered regions lie at residues 21-59 (KVGL…GGHK) and 224-274 (AMNP…QLKG). The segment covering 32–42 (SLTSGKKSSGG) has biased composition (low complexity). The segment covering 45-59 (NHGRITTRHRGGGHK) has biased composition (basic residues). Residues 263-274 (KSSDKYIKQLKG) show a composition bias toward basic and acidic residues.

The protein belongs to the universal ribosomal protein uL2 family. As to quaternary structure, part of the 50S ribosomal subunit. Forms a bridge to the 30S subunit in the 70S ribosome.

Its function is as follows. One of the primary rRNA binding proteins. Required for association of the 30S and 50S subunits to form the 70S ribosome, for tRNA binding and peptide bond formation. It has been suggested to have peptidyltransferase activity; this is somewhat controversial. Makes several contacts with the 16S rRNA in the 70S ribosome. The sequence is that of Large ribosomal subunit protein uL2 from Wolbachia pipientis wMel.